The following is a 462-amino-acid chain: Kinetochore protein Nuf2-B (462 aa).

The stretch at 143-462 (SGYKSALENV…AELNRRLSRQ (320 aa)) forms a coiled coil. The disordered stretch occupies residues 236 to 259 (EQERMKSQIVESPEQRKSKTERMK). A compositionally biased stretch (basic and acidic residues) spans 248-259 (PEQRKSKTERMK).

Belongs to the NUF2 family. As to quaternary structure, component of the NDC80 complex, which is composed of ndc80, cdca1, spbc24 and spbc25. The NDC80 complex interacts with mis12 and zwint.

The protein resides in the nucleus. Its subcellular location is the chromosome. It localises to the centromere. It is found in the kinetochore. In terms of biological role, acts as a component of the essential kinetochore-associated NDC80 complex, which is required for chromosome segregation and spindle checkpoint activity. Required for kinetochore integrity and the organization of stable microtubule binding sites in the outer plate of the kinetochore. The NDC80 complex synergistically enhances the affinity of the SKA1 complex for microtubules and may allow the NDC80 complex to track depolymerizing microtubules. This chain is Kinetochore protein Nuf2-B (nuf2-b), found in Xenopus laevis (African clawed frog).